The primary structure comprises 398 residues: MLSALGGLQRCFWAILLLALTVSLLAGFLHKDVRLLMPLLKGQAEGPPITNVMFLKTHKTASSTVLNILFRFAETHNLSVALPAGQRVHLGYPWLFLARYVEGVEEGGPEQRFNIMCNHLRFNLPEVRKVMPNDTFYFSILRNPVFQLESSFIYYKGYVPAFRDVVSLEAFLASPGTYYNESQGLRNAYARNGMWFDLGFDNNAPAEDAYVRARLADVERRFQLVLIAEHFDESMVLLRHLLRWRLDDVVSFPLNLRSPGSVTSLTPEGQERAKRWCALDWRLYQHFNRTFWARLRTELGPRRLRSEVAQLQARQRELQALCVQDGAPKNKSQITDLRLRPYQSGEADILGYSLRPGLDNQTVQLCQRMVTPELQYTARLYTQQFPEKPPKNIPFLGA.

Residues 1 to 11 (MLSALGGLQRC) are Cytoplasmic-facing. The helical; Signal-anchor for type II membrane protein transmembrane segment at 12 to 29 (FWAILLLALTVSLLAGFL) threads the bilayer. Residues 30–398 (HKDVRLLMPL…PPKNIPFLGA (369 aa)) are Lumenal-facing. 6 N-linked (GlcNAc...) asparagine glycosylation sites follow: Asn77, Asn133, Asn180, Asn288, Asn330, and Asn360.

It belongs to the galactose-3-O-sulfotransferase family.

It is found in the golgi apparatus. Its subcellular location is the golgi stack membrane. Its pathway is protein modification; carbohydrate sulfation. Its activity is regulated as follows. Strongly inhibited by Cu(2+) and Zn(2+). Transfers a sulfate group to the hydroxyl group at C3 of non-reducing beta-galactosyl residues. Acts both on type 1 (Gal-beta-1,3-GlcNAc) and type 2 (Gal-beta-1,4-GlcNAc) chains with similar efficiency. The sequence is that of Galactose-3-O-sulfotransferase 2 (GAL3ST2) from Sus scrofa (Pig).